We begin with the raw amino-acid sequence, 509 residues long: Phosphoglycerate kinase, glycosomal (509 aa).

(2R)-3-phosphoglycerate-binding residues include Val32, Asp33, Phe34, Asn35, Arg48, Ser70, His71, Gly73, Arg74, Arg224, His260, and Arg261. Position 306 (Gly306) interacts with ADP. Gly306 is a CDP binding site. Residue Lys308 coordinates (2R)-3-phosphoglycerate. Position 308 (Lys308) interacts with AMP. Position 311 (Asp311) interacts with CDP. Residue Asp311 coordinates Mg(2+). ADP-binding residues include Lys312 and Gly330. Lys312 contributes to the AMP binding site. Lys312 is an ATP binding site. Residue Gly330 coordinates CDP. Ala331 and Ala403 together coordinate AMP. The ATP site is built by Ala331 and Ala403. Positions 403 and 427 each coordinate ADP. CDP contacts are provided by Gly428 and Phe433. The ADP site is built by Phe433, Glu434, Asp466, and Ser467. Residue Glu434 participates in AMP binding. 3 residues coordinate ATP: Glu434, Asp466, and Ser467. Residue Asp466 coordinates Mg(2+).

Belongs to the phosphoglycerate kinase family. As to quaternary structure, monomer. Requires Mg(2+) as cofactor.

It is found in the glycosome. It catalyses the reaction (2R)-3-phosphoglycerate + ATP = (2R)-3-phospho-glyceroyl phosphate + ADP. The protein operates within carbohydrate degradation; glycolysis; pyruvate from D-glyceraldehyde 3-phosphate: step 2/5. This is Phosphoglycerate kinase, glycosomal (56PGK) from Trypanosoma congolense.